A 388-amino-acid polypeptide reads, in one-letter code: Succinate--CoA ligase [ADP-forming] subunit beta (388 aa).

The ATP-grasp domain maps to 9–244; it reads KQLFARYGLP…PSQEDPREAQ (236 aa). ATP contacts are provided by residues Lys-46, 53-55, Glu-99, Thr-102, and Glu-107; that span reads GRG. Mg(2+) is bound by residues Asn-199 and Asp-213. Residues Asn-264 and 321–323 contribute to the substrate site; that span reads GIV.

Belongs to the succinate/malate CoA ligase beta subunit family. In terms of assembly, heterotetramer of two alpha and two beta subunits. Requires Mg(2+) as cofactor.

It catalyses the reaction succinate + ATP + CoA = succinyl-CoA + ADP + phosphate. The catalysed reaction is GTP + succinate + CoA = succinyl-CoA + GDP + phosphate. It functions in the pathway carbohydrate metabolism; tricarboxylic acid cycle; succinate from succinyl-CoA (ligase route): step 1/1. Functionally, succinyl-CoA synthetase functions in the citric acid cycle (TCA), coupling the hydrolysis of succinyl-CoA to the synthesis of either ATP or GTP and thus represents the only step of substrate-level phosphorylation in the TCA. The beta subunit provides nucleotide specificity of the enzyme and binds the substrate succinate, while the binding sites for coenzyme A and phosphate are found in the alpha subunit. This Photorhabdus laumondii subsp. laumondii (strain DSM 15139 / CIP 105565 / TT01) (Photorhabdus luminescens subsp. laumondii) protein is Succinate--CoA ligase [ADP-forming] subunit beta.